The following is a 326-amino-acid chain: Vitamin B12 import system permease protein BtuC (326 aa).

9 helical membrane-spanning segments follow: residues 15–35 (WLLC…CAGE), 61–81 (LAVL…QALF), 88–108 (PGLL…VLLG), 112–132 (LPNW…TLIL), 146–166 (LLAG…AIYF), 184–204 (GGVD…LLWI), 240–260 (GWMV…GLVI), 274–294 (VLLP…DVVA), and 302–322 (ELPI…WLLL).

This sequence belongs to the binding-protein-dependent transport system permease family. FecCD subfamily. As to quaternary structure, the complex is composed of two ATP-binding proteins (BtuD), two transmembrane proteins (BtuC) and a solute-binding protein (BtuF).

It localises to the cell inner membrane. Functionally, part of the ABC transporter complex BtuCDF involved in vitamin B12 import. Involved in the translocation of the substrate across the membrane. This chain is Vitamin B12 import system permease protein BtuC, found in Escherichia coli (strain SE11).